The sequence spans 441 residues: Deoxyguanosinetriphosphate triphosphohydrolase-like protein 1 (441 aa).

The HD domain maps to 62 to 255 (RLTHSLEAAQ…MELADDIAYG (194 aa)).

It belongs to the dGTPase family. Type 2 subfamily.

The protein is Deoxyguanosinetriphosphate triphosphohydrolase-like protein 1 of Vibrio cholerae serotype O1 (strain ATCC 39315 / El Tor Inaba N16961).